A 569-amino-acid polypeptide reads, in one-letter code: Neutral leucine aminopeptidase, chloroplastic (569 aa).

The transit peptide at 1 to 48 directs the protein to the chloroplast; the sequence is MNGVLCSSSSSFHSYPSIFTKFQSSPIWSFSISVTPLCSRRAKRMAHS. Residues K339 and D344 each contribute to the Mn(2+) site. K351 is a catalytic residue. D364, D424, and E426 together coordinate Mn(2+). R428 is an active-site residue.

This sequence belongs to the peptidase M17 family. In terms of assembly, homohexamer (dimer of homotrimers). Mn(2+) is required as a cofactor. In terms of tissue distribution, expressed constitutively at low levels. Expressed in vegetative and reproductive organs, including leaves, stems, roots, cotyledons (after imbibition), pistils, sepals, petals, stamens, and floral buds (at protein level). Present at very low levels in healthy leaves.

It localises to the plastid. It is found in the chloroplast. It carries out the reaction Release of an N-terminal amino acid, Xaa-|-Yaa-, in which Xaa is preferably Leu, but may be other amino acids including Pro although not Arg or Lys, and Yaa may be Pro. Amino acid amides and methyl esters are also readily hydrolyzed, but rates on arylamides are exceedingly low.. The catalysed reaction is Release of N-terminal proline from a peptide.. Catalyzes the removal of unsubstituted N-terminal amino acids from various peptides. When associated as homohexamer, catalyzes the proteolyzes of Xaa-Leu dipeptides. Possesses leucine aminopeptidase activity against the model substrate leucine-amido methyl coumarin. Presumably involved in the processing and regular turnover of intracellular proteins. Functionally, functions as a molecular chaperone to protect proteins from heat-induced damage. The sequence is that of Neutral leucine aminopeptidase, chloroplastic from Solanum lycopersicum (Tomato).